We begin with the raw amino-acid sequence, 338 residues long: Adenylosuccinate synthetase (338 aa).

GTP-binding positions include 12–18 (GDEGKGK) and 42–44 (GHT). Residue aspartate 13 is the Proton acceptor of the active site. Mg(2+) is bound by residues aspartate 13 and glycine 42. Residues 13 to 16 (DEGK), 40 to 43 (NAGH), threonine 127, arginine 141, glutamine 179, threonine 194, and arginine 256 each bind IMP. Catalysis depends on histidine 43, which acts as the Proton donor. 252–258 (TVTGRRR) is a binding site for substrate. GTP contacts are provided by residues arginine 258, 284-286 (CLD), and 324-326 (STG).

This sequence belongs to the adenylosuccinate synthetase family. Homodimer. It depends on Mg(2+) as a cofactor.

Its subcellular location is the cytoplasm. It carries out the reaction IMP + L-aspartate + GTP = N(6)-(1,2-dicarboxyethyl)-AMP + GDP + phosphate + 2 H(+). It participates in purine metabolism; AMP biosynthesis via de novo pathway; AMP from IMP: step 1/2. Its function is as follows. Plays an important role in the de novo pathway of purine nucleotide biosynthesis. Catalyzes the first committed step in the biosynthesis of AMP from IMP. The sequence is that of Adenylosuccinate synthetase from Methanococcus vannielii (strain ATCC 35089 / DSM 1224 / JCM 13029 / OCM 148 / SB).